A 427-amino-acid chain; its full sequence is Serine--tRNA ligase (427 aa).

231–233 serves as a coordination point for L-serine; that stretch reads TAE. 262 to 264 contacts ATP; sequence RSE. E285 contributes to the L-serine binding site. 349–352 serves as a coordination point for ATP; that stretch reads EISS. L-serine is bound at residue S385.

Belongs to the class-II aminoacyl-tRNA synthetase family. Type-1 seryl-tRNA synthetase subfamily. Homodimer. The tRNA molecule binds across the dimer.

Its subcellular location is the cytoplasm. It carries out the reaction tRNA(Ser) + L-serine + ATP = L-seryl-tRNA(Ser) + AMP + diphosphate + H(+). The enzyme catalyses tRNA(Sec) + L-serine + ATP = L-seryl-tRNA(Sec) + AMP + diphosphate + H(+). It participates in aminoacyl-tRNA biosynthesis; selenocysteinyl-tRNA(Sec) biosynthesis; L-seryl-tRNA(Sec) from L-serine and tRNA(Sec): step 1/1. Functionally, catalyzes the attachment of serine to tRNA(Ser). Is also able to aminoacylate tRNA(Sec) with serine, to form the misacylated tRNA L-seryl-tRNA(Sec), which will be further converted into selenocysteinyl-tRNA(Sec). This is Serine--tRNA ligase from Listeria monocytogenes serotype 4b (strain CLIP80459).